Consider the following 268-residue polypeptide: Tryptophan synthase alpha chain (268 aa).

Residues glutamate 49 and aspartate 60 each act as proton acceptor in the active site.

This sequence belongs to the TrpA family. Tetramer of two alpha and two beta chains.

It catalyses the reaction (1S,2R)-1-C-(indol-3-yl)glycerol 3-phosphate + L-serine = D-glyceraldehyde 3-phosphate + L-tryptophan + H2O. Its pathway is amino-acid biosynthesis; L-tryptophan biosynthesis; L-tryptophan from chorismate: step 5/5. Functionally, the alpha subunit is responsible for the aldol cleavage of indoleglycerol phosphate to indole and glyceraldehyde 3-phosphate. This chain is Tryptophan synthase alpha chain, found in Xanthomonas oryzae pv. oryzae (strain MAFF 311018).